The chain runs to 938 residues: Isoleucine--tRNA ligase (938 aa).

Positions 58 to 68 (PYANGSIHIGH) match the 'HIGH' region motif. At Lys183 the chain carries N6-acetyllysine. Glu561 contributes to the L-isoleucyl-5'-AMP binding site. A 'KMSKS' region motif is present at residues 602-606 (KMSKS). Lys605 is an ATP binding site. The Zn(2+) site is built by Cys901, Cys904, Cys921, and Cys924.

Belongs to the class-I aminoacyl-tRNA synthetase family. IleS type 1 subfamily. Monomer. The cofactor is Zn(2+).

It is found in the cytoplasm. It carries out the reaction tRNA(Ile) + L-isoleucine + ATP = L-isoleucyl-tRNA(Ile) + AMP + diphosphate. Its function is as follows. Catalyzes the attachment of isoleucine to tRNA(Ile). As IleRS can inadvertently accommodate and process structurally similar amino acids such as valine, to avoid such errors it has two additional distinct tRNA(Ile)-dependent editing activities. One activity is designated as 'pretransfer' editing and involves the hydrolysis of activated Val-AMP. The other activity is designated 'posttransfer' editing and involves deacylation of mischarged Val-tRNA(Ile). This Escherichia coli O7:K1 (strain IAI39 / ExPEC) protein is Isoleucine--tRNA ligase.